Reading from the N-terminus, the 115-residue chain is Phosphoribosyl-AMP cyclohydrolase (115 aa).

Aspartate 80 is a binding site for Mg(2+). Position 81 (cysteine 81) interacts with Zn(2+). Residues aspartate 82 and aspartate 84 each coordinate Mg(2+). The Zn(2+) site is built by cysteine 97 and cysteine 104.

This sequence belongs to the PRA-CH family. Homodimer. Requires Mg(2+) as cofactor. Zn(2+) serves as cofactor.

It localises to the cytoplasm. The catalysed reaction is 1-(5-phospho-beta-D-ribosyl)-5'-AMP + H2O = 1-(5-phospho-beta-D-ribosyl)-5-[(5-phospho-beta-D-ribosylamino)methylideneamino]imidazole-4-carboxamide. It participates in amino-acid biosynthesis; L-histidine biosynthesis; L-histidine from 5-phospho-alpha-D-ribose 1-diphosphate: step 3/9. Its function is as follows. Catalyzes the hydrolysis of the adenine ring of phosphoribosyl-AMP. This is Phosphoribosyl-AMP cyclohydrolase from Mycolicibacterium paratuberculosis (strain ATCC BAA-968 / K-10) (Mycobacterium paratuberculosis).